The sequence spans 22 residues: Short-chain-enoyl-CoA hydratase (22 aa).

The protein belongs to the enoyl-CoA hydratase/isomerase family.

It carries out the reaction a short-chain (3S)-3-hydroxyacyl-CoA = a short-chain (2E)-enoyl-CoA + H2O. Its pathway is lipid metabolism; butanoate metabolism. This is Short-chain-enoyl-CoA hydratase (crt) from Clostridium pasteurianum.